Consider the following 82-residue polypeptide: Sec-independent protein translocase protein TatA (82 aa).

A helical transmembrane segment spans residues 2 to 22 (GFGGISLWQLLIVLAIIVLLF). The segment at 43-82 (KAMSDEKNTDKEKPEQIQKSEESAPLDSAHTEKNKDNNKV) is disordered. Composition is skewed to basic and acidic residues over residues 44–64 (AMSDEKNTDKEKPEQIQKSEE) and 71–82 (AHTEKNKDNNKV).

The protein belongs to the TatA/E family. As to quaternary structure, the Tat system comprises two distinct complexes: a TatABC complex, containing multiple copies of TatA, TatB and TatC subunits, and a separate TatA complex, containing only TatA subunits. Substrates initially bind to the TatABC complex, which probably triggers association of the separate TatA complex to form the active translocon.

It localises to the cell inner membrane. Part of the twin-arginine translocation (Tat) system that transports large folded proteins containing a characteristic twin-arginine motif in their signal peptide across membranes. TatA could form the protein-conducting channel of the Tat system. The chain is Sec-independent protein translocase protein TatA from Pseudoalteromonas translucida (strain TAC 125).